Consider the following 281-residue polypeptide: Transformer-2 protein homolog alpha (281 aa).

The segment at M1–N116 is disordered. The residue at position 2 (S2) is an N-acetylserine. Residues S2 and S14 each carry the phosphoserine modification. A Phosphothreonine modification is found at T24. Basic residues predominate over residues R51–S82. Residues S80, S82, and S84 each carry the phosphoserine modification. The residue at position 86 (T86) is a Phosphothreonine. Positions R90–G108 are enriched in basic residues. S94 and S96 each carry phosphoserine. Residues T117–T195 form the RRM domain. Residue K196 forms a Glycyl lysine isopeptide (Lys-Gly) (interchain with G-Cter in SUMO2) linkage. Residues K196 to G223 are linker. Residues H199–Y281 are disordered. Residues T200 and T202 each carry the phosphothreonine modification. The span at S213 to G231 shows a compositional bias: gly residues. Residue R233 is modified to Omega-N-methylarginine. The segment covering R233 to R257 has biased composition (basic and acidic residues). S237 carries the post-translational modification Phosphoserine. A compositionally biased stretch (basic residues) spans Y267–Y281.

Belongs to the splicing factor SR family. Binds to A3 enhancer proteins SRp75, SRp55, SRp40 and SRp30. Interacts with ILDR1 (via C-terminus) and ILDR2. In terms of processing, phosphorylated in the RS domains. Expressed in inner ear.

It is found in the nucleus. Its function is as follows. Sequence-specific RNA-binding protein which participates in the control of pre-mRNA splicing. This is Transformer-2 protein homolog alpha from Mus musculus (Mouse).